The sequence spans 308 residues: Cyclopropane mycolic acid synthase 2 (308 aa).

Residues 44-45, 79-87, 105-110, and 137-138 each bind S-adenosyl-L-methionine; these read YS, LLDIGCGWG, TLSANQ, and WE. The active site involves cysteine 290.

The protein belongs to the CFA/CMAS family. Homodimer.

It localises to the cytoplasm. The catalysed reaction is a 1-acyl-2-(9Z)-enoyl-sn-glycero-3-phospholipid + S-adenosyl-L-methionine = a 1-acyl-2-(9-cyclopronane)-acyl-sn-glycero-3-phospholipid + S-adenosyl-L-homocysteine + H(+). It participates in lipid metabolism; mycolic acid biosynthesis. Functionally, catalyzes the formation of trans cyclopropanated ketomycolate or methoxymycolate through the conversion of a double bond to a cyclopropane ring at the proximal position of an oxygenated mycolic acid via the transfer of a methylene group from S-adenosyl-L-methionine. In the absence of MmaA2, CmaA2 has a non-specific cis-cyclopropanating activity and is able to catalyze the conversion of a double bond to a cis cyclopropane ring at the distal position of an alpha mycolic acid. Cyclopropanated mycolic acids are key factors participating in cell envelope permeability, host immunomodulation and persistence. This Mycobacterium leprae (strain TN) protein is Cyclopropane mycolic acid synthase 2 (cmaA2).